A 296-amino-acid chain; its full sequence is Nucleotide-binding protein Pnuc_1915 (296 aa).

8 to 15 (GISGSGKS) lines the ATP pocket. 57–60 (DARR) serves as a coordination point for GTP.

Belongs to the RapZ-like family.

Functionally, displays ATPase and GTPase activities. This is Nucleotide-binding protein Pnuc_1915 from Polynucleobacter asymbioticus (strain DSM 18221 / CIP 109841 / QLW-P1DMWA-1) (Polynucleobacter necessarius subsp. asymbioticus).